Consider the following 416-residue polypeptide: Pentraxin fusion protein (416 aa).

Residues 1-14 form the signal peptide; sequence MKSLLLFLKSQVFG. The N-linked (GlcNAc...) asparagine glycan is linked to N129. The segment at 184–206 is disordered; that stretch reads GTEASDSSESVDGTEAPASPESD. Residues 220 to 416 form the Pentraxin (PTX) domain; sequence TNKSFMFPKE…YSMIGNVAEV (197 aa). N-linked (GlcNAc...) asparagine glycosylation occurs at N221. Residues C251 and C311 are joined by a disulfide bond. Ca(2+) contacts are provided by D275, Q353, D354, and Q364.

Ca(2+) is required as a cofactor.

The chain is Pentraxin fusion protein (pxn1) from Xenopus laevis (African clawed frog).